We begin with the raw amino-acid sequence, 357 residues long: Eukaryotic translation initiation factor 3 subunit H (357 aa).

The 143-residue stretch at 20-162 folds into the MPN domain; it reads VELESLLVMN…MRAYQLTPEF (143 aa).

The protein belongs to the eIF-3 subunit H family. As to quaternary structure, component of the eukaryotic translation initiation factor 3 (eIF-3) complex. The eIF-3 complex appears to include tif32/eif3a, SPAC25G10.08/eif3b, tif33/eif3c, SPBC4C3.07/eif3f, tif35/eif3g and sum1/eif3i. This set of common subunits may also associate exclusively with either moe1/eif3d and int6/eif3e, or with SPAC821.05/eif3h and SPAC1751.03/eif3m. The eIF-3 complex may also include SPAC3A12.13c/eif3j.

The protein localises to the cytoplasm. It is found in the nucleus. Component of the eukaryotic translation initiation factor 3 (eIF-3) complex, which is involved in protein synthesis of a specialized repertoire of mRNAs and, together with other initiation factors, stimulates binding of mRNA and methionyl-tRNAi to the 40S ribosome. The eIF-3 complex specifically targets and initiates translation of a subset of mRNAs involved in cell proliferation. This Schizosaccharomyces pombe (strain 972 / ATCC 24843) (Fission yeast) protein is Eukaryotic translation initiation factor 3 subunit H (eif3h).